Here is a 657-residue protein sequence, read N- to C-terminus: Serine/threonine kinase NLK (657 aa).

The 347-residue stretch at 208 to 554 folds into the Protein kinase domain; the sequence is SQPDRPIGYG…VEEALSHPYL (347 aa). ATP-binding positions include 214 to 222 and Lys-237; that span reads IGYGAFGVV. Asp-391 (proton acceptor) is an active-site residue.

It belongs to the protein kinase superfamily. Ser/Thr protein kinase family. Component of the beta-catenin-lit-1 complex (also called the lit-1/wrm-1 complex or the wrm-1/lit-1 kinase complex) at least composed of lit-1 and wrm-1. Interacts with wrm-1 (via N-terminus); the interaction is direct and activates lit-1 kinase activity which leads to the phosphorylation of pop-1. This promotes pop-1 interaction with par-5 and translocation of pop-1 from the nucleus to the cytoplasm. Interacts with pop-1 (when phosphorylated on 'Ser-125'); the interaction is dependent on the beta-catenin-lit-1 complex. Mg(2+) serves as cofactor.

It localises to the cytoplasm. The protein localises to the cell cortex. The protein resides in the nucleus. The catalysed reaction is L-seryl-[protein] + ATP = O-phospho-L-seryl-[protein] + ADP + H(+). It carries out the reaction L-threonyl-[protein] + ATP = O-phospho-L-threonyl-[protein] + ADP + H(+). Has a role in the Wnt signaling pathway controlling the asymmetry of cell divisions during embryogenesis. Operates in the AB and EMS cell lineages influencing cell specification. Required for body wall muscle development, endoderm development, pop-1 asymmetry and T-cell division asymmetry. Component of the beta-catenin-lit-1 complex which promotes the phosphorylation, down-regulation and subcellular relocation of pop-1. Regulates plp-1 nuclear localization in embryos. Plays a role in male tail tip morphogenesis. This Caenorhabditis briggsae protein is Serine/threonine kinase NLK.